The following is a 340-amino-acid chain: S-adenosylmethionine:tRNA ribosyltransferase-isomerase (340 aa).

It belongs to the QueA family. As to quaternary structure, monomer.

Its subcellular location is the cytoplasm. The catalysed reaction is 7-aminomethyl-7-carbaguanosine(34) in tRNA + S-adenosyl-L-methionine = epoxyqueuosine(34) in tRNA + adenine + L-methionine + 2 H(+). Its pathway is tRNA modification; tRNA-queuosine biosynthesis. Transfers and isomerizes the ribose moiety from AdoMet to the 7-aminomethyl group of 7-deazaguanine (preQ1-tRNA) to give epoxyqueuosine (oQ-tRNA). This Francisella tularensis subsp. holarctica (strain OSU18) protein is S-adenosylmethionine:tRNA ribosyltransferase-isomerase.